Reading from the N-terminus, the 702-residue chain is MDEDLNHNLFFKTIKFKFPKIFNTIESKCYTLCIPQSPSLYRMNITQKIVESHVFIESKYYQSEYETLNKESNYIIDNGYIMEKENNNKKVKIMFDELCYNKDYKSYRLICIEEPLTGGASGLNSSISRSESDLGDLLITQGIVKPQRPTFDQATQFFLLDSISTNINTIVFRKANQQLEEFERLHSINSKTDVDFFRKDLLLIHNRLMDDLVCANADFKQLHSNEKQMNSLSLILESYILGKIQNKLYGDLKRLYEKENQHLYEKMIYLSKLSFEDIGVKSDFEPHLTKAKEVIESFNTGINYINNNNNNNNNNNNNNNNNYNNNNNNNNNNNNNNNINNNINNNINNINSNNNNNNNNINNNNNNNNNNNNNNNNNNNNNNNEIIITPMDKLLSIVQGSREIEESIKARAILELADEDDILTITGDDALPLTAYLLIHARPKYLATDLAYCSKFILTDIFNSSYGYHLVNLIAAIDYIKSLDILSPTKTTTSSNNSRNTSPTSSTTNITYGGNSESLFAQSSVNNSTISSPKQPEDEAALFNNLKKSLSTMNLNPPQQSQQQQQQQQQQQQQQQESNFYSNNNNNNNNKTFNNSIPPHFISNQNSNNNNQFTSTPNLFNNNNNNTNSNNSNNNNNNNQHNSRYSTMSFSTNISNNTNISNKYVKAPAVISLDDDSDNLGDFIGKLRDMRDDEVIVSTHFK.

Composition is skewed to low complexity over residues 306-384, 488-511, 559-590, 603-612, and 621-639; these read NNNN…NNNN, PTKT…TNIT, QQSQ…NNNN, and SNQNSNNNNQ. Disordered regions lie at residues 306 to 385, 488 to 513, and 551 to 645; these read NNNN…NNNE, PTKT…ITYG, and STMN…NSRY. A VPS9 domain is found at 337–489; the sequence is NNINNNINNN…IKSLDILSPT (153 aa).

This is an uncharacterized protein from Dictyostelium discoideum (Social amoeba).